The chain runs to 425 residues: Histone-binding protein RBBP7 (425 aa).

Alanine 2 bears the N-acetylalanine mark. Serine 3 carries the post-translational modification Phosphoserine. Lysine 4 carries the N6-acetyllysine; alternate modification. Lysine 4 is covalently cross-linked (Glycyl lysine isopeptide (Lys-Gly) (interchain with G-Cter in SUMO2); alternate). Residue lysine 4 forms a Glycyl lysine isopeptide (Lys-Gly) (interchain with G-Cter in ubiquitin); alternate linkage. Residue threonine 10 is modified to Phosphothreonine. WD repeat units lie at residues 47–122 (QWLP…KINH), 128–173 (RARY…LRLR), 181–217 (GLSW…KIVD), 228–269 (VVED…HLVD), 275–312 (VNCL…LHTF), 318–369 (EIFQ…LFIH), and 376–403 (ISDF…IWQM). Serine 95 is modified (phosphoserine). Lysine 101 is covalently cross-linked (Glycyl lysine isopeptide (Lys-Gly) (interchain with G-Cter in SUMO2)). Lysine 119 is modified (N6-acetyllysine). Lysine 155 participates in a covalent cross-link: Glycyl lysine isopeptide (Lys-Gly) (interchain with G-Cter in SUMO2). Lysine 159 is modified (N6-acetyllysine; alternate). Residue lysine 159 forms a Glycyl lysine isopeptide (Lys-Gly) (interchain with G-Cter in SUMO2); alternate linkage. Serine 354 carries the post-translational modification Phosphoserine.

The protein belongs to the WD repeat RBAP46/RBAP48/MSI1 family. Binds directly to helix 1 of the histone fold of histone H4, a region that is not accessible when H4 is in chromatin. Subunit of the type B histone acetyltransferase (HAT) complex, composed of RBBP7 and HAT1. Subunit of the core histone deacetylase (HDAC) complex, which is composed of HDAC1, HDAC2, RBBP4 and RBBP7. The core HDAC complex associates with SIN3A, ARID4B/SAP180, SAP18, SAP30, SAP130, SUDS3/SAP45 and possibly ARID4A/RBP1 and ING1 to form the SIN3 HDAC complex. Component of the nucleosome remodeling and deacetylase (NuRD) repressor complex, composed of core proteins MTA1, MTA2, MTA3, RBBP4, RBBP7, HDAC1, HDAC2, MBD2, MBD3, and peripherally associated proteins CDK2AP1, CDK2AP2, GATAD2A, GATAD2B, CHD3, CHD4 and CHD5. The exact stoichiometry of the NuRD complex is unknown, and some subunits such as MBD2 and MBD3, GATAD2A and GATAD2B, and CHD3, CHD4 and CHD5 define mutually exclusive NuRD complexes. The NuRD complex may interact with MBD3L1. The NuRD complex may interact with MBD3L2. Subunit of the PRC2/EED-EZH2 complex, which is composed of at least EED, EZH2, RBBP4, RBBP7 and SUZ12. The PRC2/EED-EZH2 complex may also associate with HDAC1. Component of the NURF-1 ISWI chromatin remodeling complex (also called the nucleosome-remodeling factor (NURF) complex) at least composed of SMARCA1, BPTF, RBBP4 and RBBP7. Within the complex interacts with SMARCA1. Component of the BPFT-SMARCA1 complex at least composed of SMARCA1, BPFT, RBBP4 and RBBP7; the complex is catalytically inactive and does not remodel chromatin. Within the complex interacts with SMARCA1. Interacts with BRCA1. Interacts with CDK2AP1. Interacts with CENPA. Interacts with CHD3. Interacts with CHD4. Interacts with CREBBP, and this interaction may be enhanced by the binding of phosphorylated CREB1 to CREBBP. Interacts with HDAC7. Interacts with MTA1. Interacts with PWWP2B. Interacts with RB1 (via viral protein-binding domain). Interacts with SUV39H1.

It localises to the nucleus. Its function is as follows. Core histone-binding subunit that may target chromatin remodeling factors, histone acetyltransferases and histone deacetylases to their histone substrates in a manner that is regulated by nucleosomal DNA. Component of several complexes which regulate chromatin metabolism. These include the type B histone acetyltransferase (HAT) complex, which is required for chromatin assembly following DNA replication; the core histone deacetylase (HDAC) complex, which promotes histone deacetylation and consequent transcriptional repression; the nucleosome remodeling and histone deacetylase complex (the NuRD complex), which promotes transcriptional repression by histone deacetylation and nucleosome remodeling; and the PRC2/EED-EZH2 complex, which promotes repression of homeotic genes during development; and the NURF (nucleosome remodeling factor) complex. This Bos taurus (Bovine) protein is Histone-binding protein RBBP7 (RBBP7).